Consider the following 249-residue polypeptide: tRNA pseudouridine synthase A (249 aa).

Aspartate 52 serves as the catalytic Nucleophile. Tyrosine 110 is a binding site for substrate.

It belongs to the tRNA pseudouridine synthase TruA family. As to quaternary structure, homodimer.

It catalyses the reaction uridine(38/39/40) in tRNA = pseudouridine(38/39/40) in tRNA. Formation of pseudouridine at positions 38, 39 and 40 in the anticodon stem and loop of transfer RNAs. The protein is tRNA pseudouridine synthase A of Azobacteroides pseudotrichonymphae genomovar. CFP2.